A 177-amino-acid chain; its full sequence is ATP synthase subunit delta (177 aa).

This sequence belongs to the ATPase delta chain family. As to quaternary structure, F-type ATPases have 2 components, F(1) - the catalytic core - and F(0) - the membrane proton channel. F(1) has five subunits: alpha(3), beta(3), gamma(1), delta(1), epsilon(1). F(0) has three main subunits: a(1), b(2) and c(10-14). The alpha and beta chains form an alternating ring which encloses part of the gamma chain. F(1) is attached to F(0) by a central stalk formed by the gamma and epsilon chains, while a peripheral stalk is formed by the delta and b chains.

It is found in the cell inner membrane. Its function is as follows. F(1)F(0) ATP synthase produces ATP from ADP in the presence of a proton or sodium gradient. F-type ATPases consist of two structural domains, F(1) containing the extramembraneous catalytic core and F(0) containing the membrane proton channel, linked together by a central stalk and a peripheral stalk. During catalysis, ATP synthesis in the catalytic domain of F(1) is coupled via a rotary mechanism of the central stalk subunits to proton translocation. In terms of biological role, this protein is part of the stalk that links CF(0) to CF(1). It either transmits conformational changes from CF(0) to CF(1) or is implicated in proton conduction. The polypeptide is ATP synthase subunit delta (Yersinia enterocolitica serotype O:8 / biotype 1B (strain NCTC 13174 / 8081)).